Reading from the N-terminus, the 110-residue chain is MENEATVPAGREASMTETNETRRYLVTGRVQGVGFRWFVEHAAVQLGLAGWVRNRADGRVEVLASGPRQKLHDLYVELKKGPRASRVDNVEVEDAAPETNLKSFRIEGTW.

Residues 21-108 (TRRYLVTGRV…TNLKSFRIEG (88 aa)) form the Acylphosphatase-like domain. Residues Arg-36 and Asn-54 contribute to the active site.

This sequence belongs to the acylphosphatase family.

It catalyses the reaction an acyl phosphate + H2O = a carboxylate + phosphate + H(+). The protein is Acylphosphatase (acyP) of Koribacter versatilis (strain Ellin345).